Here is a 185-residue protein sequence, read N- to C-terminus: Elongation factor P (185 aa).

Belongs to the elongation factor P family.

The protein resides in the cytoplasm. It participates in protein biosynthesis; polypeptide chain elongation. Its function is as follows. Involved in peptide bond synthesis. Stimulates efficient translation and peptide-bond synthesis on native or reconstituted 70S ribosomes in vitro. Probably functions indirectly by altering the affinity of the ribosome for aminoacyl-tRNA, thus increasing their reactivity as acceptors for peptidyl transferase. This Halalkalibacterium halodurans (strain ATCC BAA-125 / DSM 18197 / FERM 7344 / JCM 9153 / C-125) (Bacillus halodurans) protein is Elongation factor P.